Here is a 606-residue protein sequence, read N- to C-terminus: Melanoma-associated antigen D2 (606 aa).

Disordered regions lie at residues 1–29 (MSDT…MMQT) and 52–204 (SEDV…GGRR). Ser-2 carries the post-translational modification N-acetylserine. Ser-5 carries the post-translational modification Phosphoserine. Thr-72 bears the Phosphothreonine mark. Residues 79–100 (PATQASSTTQLTDTQVLATENK) show a composition bias toward polar residues. A compositionally biased stretch (basic and acidic residues) spans 122-131 (ETKKVSHVAD). Positions 142–164 (EAAPSQASADEPEPESAAAQSQE) are enriched in low complexity. Ser-157 carries the phosphoserine modification. The segment covering 171–181 (KVKAKKARKVK) has biased composition (basic residues). 6 positions are modified to phosphoserine: Ser-190, Ser-191, Ser-194, Ser-197, Ser-244, and Ser-247. The span at 248–260 (PKARRGKARRRAA) shows a compositional bias: basic residues. Residues 248–275 (PKARRGKARRRAAKLQSSQEPEAPPPRD) form a disordered region. Phosphoserine occurs at positions 264 and 265. Residues 279–478 (LQGRANDLVK…KEWAAQYREA (200 aa)) enclose the MAGE domain. The tract at residues 534–563 (GAEAKAKAQESGSASTGASTSTNNSASASA) is disordered.

As to quaternary structure, interacts with GNAS.

In terms of biological role, regulates the expression, localization to the plasma membrane and function of the sodium chloride cotransporters SLC12A1 and SLC12A3, two key components of salt reabsorption in the distal renal tubule. This is Melanoma-associated antigen D2 (MAGED2) from Pongo abelii (Sumatran orangutan).